The chain runs to 447 residues: ATP-dependent protease ATPase subunit HslU (447 aa).

ATP is bound by residues I18, 60–65, D259, E325, and R397; that span reads GVGKTE.

This sequence belongs to the ClpX chaperone family. HslU subfamily. In terms of assembly, a double ring-shaped homohexamer of HslV is capped on each side by a ring-shaped HslU homohexamer. The assembly of the HslU/HslV complex is dependent on binding of ATP.

It is found in the cytoplasm. ATPase subunit of a proteasome-like degradation complex; this subunit has chaperone activity. The binding of ATP and its subsequent hydrolysis by HslU are essential for unfolding of protein substrates subsequently hydrolyzed by HslV. HslU recognizes the N-terminal part of its protein substrates and unfolds these before they are guided to HslV for hydrolysis. This chain is ATP-dependent protease ATPase subunit HslU, found in Burkholderia ambifaria (strain MC40-6).